The sequence spans 257 residues: Diphthine synthase (257 aa).

S-adenosyl-L-methionine-binding positions include isoleucine 11, aspartate 89, isoleucine 92, serine 117–valine 118, leucine 169, leucine 210, and histidine 235.

The protein belongs to the diphthine synthase family. Homodimer.

It carries out the reaction 2-[(3S)-amino-3-carboxypropyl]-L-histidyl-[translation elongation factor 2] + 3 S-adenosyl-L-methionine = diphthine-[translation elongation factor 2] + 3 S-adenosyl-L-homocysteine + 3 H(+). The protein operates within protein modification; peptidyl-diphthamide biosynthesis. Its function is as follows. S-adenosyl-L-methionine-dependent methyltransferase that catalyzes the trimethylation of the amino group of the modified target histidine residue in translation elongation factor 2 (EF-2), to form an intermediate called diphthine. The three successive methylation reactions represent the second step of diphthamide biosynthesis. The chain is Diphthine synthase from Saccharolobus solfataricus (strain ATCC 35092 / DSM 1617 / JCM 11322 / P2) (Sulfolobus solfataricus).